We begin with the raw amino-acid sequence, 361 residues long: Mannose-1-phosphate guanyltransferase 2 (361 aa).

Belongs to the transferase hexapeptide repeat family.

Its subcellular location is the cytoplasm. The catalysed reaction is alpha-D-mannose 1-phosphate + GTP + H(+) = GDP-alpha-D-mannose + diphosphate. It participates in nucleotide-sugar biosynthesis; GDP-alpha-D-mannose biosynthesis; GDP-alpha-D-mannose from alpha-D-mannose 1-phosphate (GTP route): step 1/1. Functionally, involved in cell wall synthesis where it is required for glycosylation. Involved in cell cycle progression through cell-size checkpoint. The sequence is that of Mannose-1-phosphate guanyltransferase 2 (MPG1) from Candida glabrata (strain ATCC 2001 / BCRC 20586 / JCM 3761 / NBRC 0622 / NRRL Y-65 / CBS 138) (Yeast).